Consider the following 332-residue polypeptide: Glycerol-3-phosphate dehydrogenase [NAD(P)+] (332 aa).

Ser10, Trp11, Lys31, and Lys105 together coordinate NADPH. The sn-glycerol 3-phosphate site is built by Lys105, Gly136, and Ser138. Ala140 lines the NADPH pocket. Lys191, Asp244, Ser254, Arg255, and Asn256 together coordinate sn-glycerol 3-phosphate. The active-site Proton acceptor is the Lys191. Arg255 provides a ligand contact to NADPH. Positions 279 and 281 each coordinate NADPH.

It belongs to the NAD-dependent glycerol-3-phosphate dehydrogenase family.

The protein localises to the cytoplasm. The enzyme catalyses sn-glycerol 3-phosphate + NAD(+) = dihydroxyacetone phosphate + NADH + H(+). It carries out the reaction sn-glycerol 3-phosphate + NADP(+) = dihydroxyacetone phosphate + NADPH + H(+). Its pathway is membrane lipid metabolism; glycerophospholipid metabolism. Its function is as follows. Catalyzes the reduction of the glycolytic intermediate dihydroxyacetone phosphate (DHAP) to sn-glycerol 3-phosphate (G3P), the key precursor for phospholipid synthesis. This is Glycerol-3-phosphate dehydrogenase [NAD(P)+] from Anaeromyxobacter sp. (strain K).